Here is a 247-residue protein sequence, read N- to C-terminus: Orotidine 5'-phosphate decarboxylase (247 aa).

Substrate is bound by residues aspartate 22, lysine 44, 71-80, threonine 131, arginine 192, glutamine 201, glycine 221, and arginine 222; that span reads DLKFHDIPNT. Residue lysine 73 is the Proton donor of the active site.

The protein belongs to the OMP decarboxylase family. Type 1 subfamily. As to quaternary structure, homodimer.

It catalyses the reaction orotidine 5'-phosphate + H(+) = UMP + CO2. Its pathway is pyrimidine metabolism; UMP biosynthesis via de novo pathway; UMP from orotate: step 2/2. In terms of biological role, catalyzes the decarboxylation of orotidine 5'-monophosphate (OMP) to uridine 5'-monophosphate (UMP). In Pectobacterium atrosepticum (strain SCRI 1043 / ATCC BAA-672) (Erwinia carotovora subsp. atroseptica), this protein is Orotidine 5'-phosphate decarboxylase.